We begin with the raw amino-acid sequence, 138 residues long: ATP synthase epsilon chain (138 aa).

Belongs to the ATPase epsilon chain family. In terms of assembly, F-type ATPases have 2 components, CF(1) - the catalytic core - and CF(0) - the membrane proton channel. CF(1) has five subunits: alpha(3), beta(3), gamma(1), delta(1), epsilon(1). CF(0) has three main subunits: a, b and c.

Its subcellular location is the cell inner membrane. Functionally, produces ATP from ADP in the presence of a proton gradient across the membrane. The protein is ATP synthase epsilon chain of Citrifermentans bemidjiense (strain ATCC BAA-1014 / DSM 16622 / JCM 12645 / Bem) (Geobacter bemidjiensis).